The following is a 372-amino-acid chain: Enoyl-[acyl-carrier-protein] reductase, mitochondrial (372 aa).

The N-terminal 18 residues, 1 to 18 (MSFFKTAVRRFSSTSITR), are a transit peptide targeting the mitochondrion. Tyr-72 serves as the catalytic Proton donor. NADP(+) is bound by residues Asn-157, 183–186 (NSMV), 206–208 (RNR), 279–282 (FGGM), 304–306 (FWV), and Lys-365.

This sequence belongs to the zinc-containing alcohol dehydrogenase family. Quinone oxidoreductase subfamily. In terms of assembly, homodimer.

The protein resides in the mitochondrion matrix. The enzyme catalyses a 2,3-saturated acyl-[ACP] + NADP(+) = a (2E)-enoyl-[ACP] + NADPH + H(+). In terms of biological role, catalyzes the NADPH-dependent reduction of trans-2-enoyl thioesters in mitochondrial fatty acid synthesis (fatty acid synthesis type II). Fatty acid chain elongation in mitochondria uses acyl carrier protein (ACP) as an acyl group carrier, but the enzyme accepts both ACP and CoA thioesters as substrates in vitro. Required for respiration and the maintenance of the mitochondrial compartment. The polypeptide is Enoyl-[acyl-carrier-protein] reductase, mitochondrial (etr1) (Schizosaccharomyces pombe (strain 972 / ATCC 24843) (Fission yeast)).